The chain runs to 393 residues: Short-chain dehydrogenase/reductase family 42E member 1 (393 aa).

Tyr-152 functions as the Proton acceptor in the catalytic mechanism. NAD(+) is bound at residue Lys-156. 2 consecutive transmembrane segments (helical) span residues 282 to 302 (LPLTLVYCFAFLTEMVHFILG) and 371 to 391 (GLLVFLLIIAVLMWLPSSVIL).

This sequence belongs to the 3-beta-HSD family.

The protein resides in the membrane. This chain is Short-chain dehydrogenase/reductase family 42E member 1 (SDR42E1), found in Homo sapiens (Human).